We begin with the raw amino-acid sequence, 529 residues long: Listeriolysin O (529 aa).

Positions 1-24 (MKKIMLVFITLILVSLPIAQQTEA) are cleaved as a signal peptide. The next 4 membrane-spanning stretches (beta stranded) occupy residues 214–227 (ESQL…AFKA), 234–243 (VNFGAISEGK), 312–321 (STKVKAAFDA), and 329–341 (SGDV…IKNS). The short motif at 483-493 (ECTGLAWEWWR) is the Conserved undecapeptide element. The Cholesterol binding signature appears at 515–516 (TL).

The protein belongs to the cholesterol-dependent cytolysin family. Homooligomeric pore complex of 35 to 50 subunits; when inserted in the host membrane.

Its subcellular location is the secreted. It is found in the host membrane. The protein localises to the host cell membrane. Its activity is regulated as follows. Activity of listeriolysin O is regulated on multiple levels. It should be high in the phagosome, thereby allowing escape of the bacteria from the phagosomal compartment. Then, once inside the host cytosol, the activity must be controlled to prevent lysis of the host plasma membrane and loss of the intracellular environment. A cholesterol-dependent toxin that causes cytolysis by forming pores in cholesterol containing host membranes. After binding to target membranes, the protein undergoes a major conformation change, leading to its insertion in the host membrane and formation of an oligomeric pore complex. Cholesterol is required for binding to host membranes, membrane insertion and pore formation; cholesterol binding is mediated by a Thr-Leu pair in the C-terminus. Acts as a major virulence factor required for the escape of bacteria from phagosomal vacuoles and entry into the host cytosol. Can be reversibly inactivated by oxidation. The chain is Listeriolysin O (hly) from Listeria monocytogenes serotype 4b (strain CLIP80459).